The following is a 642-amino-acid chain: Putative ATP-binding protein YdiF (642 aa).

2 consecutive ABC transporter domains span residues 4 to 259 (LQVN…EKDL) and 327 to 541 (LRVQ…ELEK). Residues 36-43 (GRNGAGKS) and 360-367 (GPNGIGKS) contribute to the ATP site. Basic and acidic residues-rich tracts occupy residues 541–550 (KMNQQEETDK) and 557–567 (SDSKRSYEEEK). Residues 541–567 (KMNQQEETDKTPATVKSDSKRSYEEEK) form a disordered region.

It belongs to the ABC transporter superfamily. ABCF family. YdiF subfamily.

The chain is Putative ATP-binding protein YdiF (ydiF) from Bacillus subtilis (strain 168).